The following is a 271-amino-acid chain: Large ribosomal subunit protein uL2 (271 aa).

Residues 221–271 form a disordered region; the sequence is RGVAMNPVDHPMGGGEGKSSGGHPRNRNGIPSNGFKTRNKKKITNKYIIKK. Residues 257 to 271 are compositionally biased toward basic residues; sequence TRNKKKITNKYIIKK.

The protein belongs to the universal ribosomal protein uL2 family. Part of the 50S ribosomal subunit. Forms a bridge to the 30S subunit in the 70S ribosome.

In terms of biological role, one of the primary rRNA binding proteins. Required for association of the 30S and 50S subunits to form the 70S ribosome, for tRNA binding and peptide bond formation. It has been suggested to have peptidyltransferase activity; this is somewhat controversial. Makes several contacts with the 16S rRNA in the 70S ribosome. The polypeptide is Large ribosomal subunit protein uL2 (Karelsulcia muelleri (strain GWSS) (Sulcia muelleri)).